Reading from the N-terminus, the 1019-residue chain is Type VI secretion system spike protein VgrG2b (1019 aa).

Residues 268–291 (AGRPFTESRLRGHRRDARVASVSG) form a disordered region. Histidine 935 lines the Zn(2+) pocket. Residue glutamate 936 is part of the active site. Zn(2+) is bound by residues histidine 939 and glutamate 983.

Belongs to the VgrG protein family. Interacts with Tla3; this interaction promotes Tle3 loading onto VgrG2b. Interacts with host gamma-tubulin ring complex components GCP1 and GCP4. It depends on Zn(2+) as a cofactor.

It localises to the secreted. In terms of biological role, part of the H2 type VI secretion system (H2-T6SS) specialized secretion system, which delivers several virulence factors in both prokaryotic and eukaryotic cells during infection. Forms the spike at the tip of the elongating tube probably formed by haemolysin co-regulated protein 2b/Hcp2b. Allows the delivery of the Tle3 antibacterial toxin to target cells where it exerts its toxicity. Additionally, acts directly as an effector and promotes internalization by interacting with the host gamma-tubulin ring complex. Elicits toxicity also in the bacterial periplasm and disrupts bacterial cell morphology. Toxicity is counteracted by a cognate immunity protein. In Pseudomonas aeruginosa (strain ATCC 15692 / DSM 22644 / CIP 104116 / JCM 14847 / LMG 12228 / 1C / PRS 101 / PAO1), this protein is Type VI secretion system spike protein VgrG2b (vgrG2b).